We begin with the raw amino-acid sequence, 60 residues long: uncharacterized protein (60 aa).

This is an uncharacterized protein from Ureaplasma parvum serovar 3 (strain ATCC 700970).